The sequence spans 509 residues: ATP synthase subunit alpha (509 aa).

169–176 is a binding site for ATP; sequence GDRQTGKT.

The protein belongs to the ATPase alpha/beta chains family. As to quaternary structure, F-type ATPases have 2 components, CF(1) - the catalytic core - and CF(0) - the membrane proton channel. CF(1) has five subunits: alpha(3), beta(3), gamma(1), delta(1), epsilon(1). CF(0) has three main subunits: a(1), b(2) and c(9-12). The alpha and beta chains form an alternating ring which encloses part of the gamma chain. CF(1) is attached to CF(0) by a central stalk formed by the gamma and epsilon chains, while a peripheral stalk is formed by the delta and b chains.

It is found in the cell inner membrane. The catalysed reaction is ATP + H2O + 4 H(+)(in) = ADP + phosphate + 5 H(+)(out). In terms of biological role, produces ATP from ADP in the presence of a proton gradient across the membrane. The alpha chain is a regulatory subunit. This is ATP synthase subunit alpha from Methylocella silvestris (strain DSM 15510 / CIP 108128 / LMG 27833 / NCIMB 13906 / BL2).